A 465-amino-acid polypeptide reads, in one-letter code: UDP-N-acetylglucosamine 1-carboxyvinyltransferase (465 aa).

22 to 23 (KN) lines the phosphoenolpyruvate pocket. Arg94 serves as a coordination point for UDP-N-acetyl-alpha-D-glucosamine. Cys119 functions as the Proton donor in the catalytic mechanism. At Cys119 the chain carries 2-(S-cysteinyl)pyruvic acid O-phosphothioketal. Residues Asp313 and Val335 each coordinate UDP-N-acetyl-alpha-D-glucosamine.

The protein belongs to the EPSP synthase family. MurA subfamily.

Its subcellular location is the cytoplasm. The catalysed reaction is phosphoenolpyruvate + UDP-N-acetyl-alpha-D-glucosamine = UDP-N-acetyl-3-O-(1-carboxyvinyl)-alpha-D-glucosamine + phosphate. The protein operates within cell wall biogenesis; peptidoglycan biosynthesis. Its function is as follows. Cell wall formation. Adds enolpyruvyl to UDP-N-acetylglucosamine. This Protochlamydia amoebophila (strain UWE25) protein is UDP-N-acetylglucosamine 1-carboxyvinyltransferase.